The sequence spans 618 residues: UvrABC system protein C (618 aa).

The region spanning 13–92 (DKPGVYLMKN…IKKYRPKYNI (80 aa)) is the GIY-YIG domain. One can recognise a UVR domain in the interval 204 to 239 (LDIVENFKLNMERAAENLEFEKAAMLRDKINIIEKI).

Belongs to the UvrC family. As to quaternary structure, interacts with UvrB in an incision complex.

The protein localises to the cytoplasm. In terms of biological role, the UvrABC repair system catalyzes the recognition and processing of DNA lesions. UvrC both incises the 5' and 3' sides of the lesion. The N-terminal half is responsible for the 3' incision and the C-terminal half is responsible for the 5' incision. In Clostridium botulinum (strain Langeland / NCTC 10281 / Type F), this protein is UvrABC system protein C.